We begin with the raw amino-acid sequence, 283 residues long: Formamidopyrimidine-DNA glycosylase (283 aa).

Proline 2 functions as the Schiff-base intermediate with DNA in the catalytic mechanism. Catalysis depends on glutamate 3, which acts as the Proton donor. Lysine 58 serves as the catalytic Proton donor; for beta-elimination activity. Positions 100, 119, and 162 each coordinate DNA. An FPG-type zinc finger spans residues 247 to 283; sequence RVYGREGLPCVTPGCSGTVGRIVQSGRSSFHCPLCQR. Arginine 273 acts as the Proton donor; for delta-elimination activity in catalysis.

Belongs to the FPG family. Monomer. The cofactor is Zn(2+).

It carries out the reaction Hydrolysis of DNA containing ring-opened 7-methylguanine residues, releasing 2,6-diamino-4-hydroxy-5-(N-methyl)formamidopyrimidine.. The catalysed reaction is 2'-deoxyribonucleotide-(2'-deoxyribose 5'-phosphate)-2'-deoxyribonucleotide-DNA = a 3'-end 2'-deoxyribonucleotide-(2,3-dehydro-2,3-deoxyribose 5'-phosphate)-DNA + a 5'-end 5'-phospho-2'-deoxyribonucleoside-DNA + H(+). In terms of biological role, involved in base excision repair of DNA damaged by oxidation or by mutagenic agents. Acts as a DNA glycosylase that recognizes and removes damaged bases. Has a preference for oxidized purines, such as 7,8-dihydro-8-oxoguanine (8-oxoG). Has AP (apurinic/apyrimidinic) lyase activity and introduces nicks in the DNA strand. Cleaves the DNA backbone by beta-delta elimination to generate a single-strand break at the site of the removed base with both 3'- and 5'-phosphates. In Cereibacter sphaeroides (strain KD131 / KCTC 12085) (Rhodobacter sphaeroides), this protein is Formamidopyrimidine-DNA glycosylase.